The primary structure comprises 252 residues: Imidazole glycerol phosphate synthase subunit HisF (252 aa).

Catalysis depends on residues Asp11 and Asp130.

Belongs to the HisA/HisF family. As to quaternary structure, heterodimer of HisH and HisF.

It localises to the cytoplasm. The catalysed reaction is 5-[(5-phospho-1-deoxy-D-ribulos-1-ylimino)methylamino]-1-(5-phospho-beta-D-ribosyl)imidazole-4-carboxamide + L-glutamine = D-erythro-1-(imidazol-4-yl)glycerol 3-phosphate + 5-amino-1-(5-phospho-beta-D-ribosyl)imidazole-4-carboxamide + L-glutamate + H(+). Its pathway is amino-acid biosynthesis; L-histidine biosynthesis; L-histidine from 5-phospho-alpha-D-ribose 1-diphosphate: step 5/9. Functionally, IGPS catalyzes the conversion of PRFAR and glutamine to IGP, AICAR and glutamate. The HisF subunit catalyzes the cyclization activity that produces IGP and AICAR from PRFAR using the ammonia provided by the HisH subunit. This chain is Imidazole glycerol phosphate synthase subunit HisF, found in Lacticaseibacillus paracasei (strain ATCC 334 / BCRC 17002 / CCUG 31169 / CIP 107868 / KCTC 3260 / NRRL B-441) (Lactobacillus paracasei).